The primary structure comprises 26 residues: Photosystem II stability/assembly factor HCF136, chloroplastic (26 aa).

The protein belongs to the Ycf48 family.

It localises to the plastid. It is found in the chloroplast thylakoid lumen. Functionally, essential for photosystem II (PSII) biogenesis; required for assembly of an early intermediate in PSII assembly that includes D2 (psbD) and cytochrome b559. The polypeptide is Photosystem II stability/assembly factor HCF136, chloroplastic (Populus euphratica (Euphrates poplar)).